Consider the following 285-residue polypeptide: Steroidogenic acute regulatory protein, mitochondrial (285 aa).

The transit peptide at 1-63 (MLLATFKLCA…RRGSLLGSQL (63 aa)) directs the protein to the mitochondrion. Phosphoserine; by PKA is present on residues Ser57 and Ser195. Residues 67–280 (LYSDQELAYI…LRKRLESCPA (214 aa)) form the START domain.

May interact with TSPO.

Its subcellular location is the mitochondrion. The enzyme catalyses cholesterol(in) = cholesterol(out). The protein operates within steroid metabolism; cholesterol metabolism. Plays a key role in steroid hormone synthesis by enhancing the metabolism of cholesterol into pregnenolone. Mediates the transfer of cholesterol from the outer mitochondrial membrane to the inner mitochondrial membrane where it is cleaved to pregnenolone. The chain is Steroidogenic acute regulatory protein, mitochondrial (STAR) from Ovis aries (Sheep).